The primary structure comprises 945 residues: Protein translocase subunit SecA (945 aa).

ATP-binding positions include glutamine 90, 108 to 112 (GEGKT), and aspartate 509. Positions 533–568 (VKPEDGHKPPVPLQRRSESSGFGEDKDVTTDNSKPL) are disordered. The span at 547–561 (RRSESSGFGEDKDVT) shows a compositional bias: basic and acidic residues.

It belongs to the SecA family. As to quaternary structure, monomer and homodimer. Part of the essential Sec protein translocation apparatus which comprises SecA, SecYEG and auxiliary proteins SecDF. Other proteins may also be involved.

It localises to the cell inner membrane. The protein resides in the cellular thylakoid membrane. It is found in the cytoplasm. The catalysed reaction is ATP + H2O + cellular proteinSide 1 = ADP + phosphate + cellular proteinSide 2.. Part of the Sec protein translocase complex. Interacts with the SecYEG preprotein conducting channel. Has a central role in coupling the hydrolysis of ATP to the transfer of proteins into and across the cell membrane, serving as an ATP-driven molecular motor driving the stepwise translocation of polypeptide chains across the membrane. Functionally, probably participates in protein translocation into and across both the cytoplasmic and thylakoid membranes in cyanobacterial cells. This Prochlorococcus marinus (strain MIT 9211) protein is Protein translocase subunit SecA.